A 273-amino-acid chain; its full sequence is Dermonecrotic toxin LarSicTox-alphaIB1aiv (273 aa).

Histidine 5 is a catalytic residue. Residues glutamate 25 and aspartate 27 each coordinate Mg(2+). Residue histidine 41 is the Nucleophile of the active site. Intrachain disulfides connect cysteine 45–cysteine 51 and cysteine 47–cysteine 190. A Mg(2+)-binding site is contributed by aspartate 85. Asparagine 250 carries N-linked (GlcNAc...) asparagine glycosylation.

This sequence belongs to the arthropod phospholipase D family. Class II subfamily. Mg(2+) serves as cofactor. Expressed by the venom gland.

It is found in the secreted. The catalysed reaction is an N-(acyl)-sphingosylphosphocholine = an N-(acyl)-sphingosyl-1,3-cyclic phosphate + choline. It carries out the reaction an N-(acyl)-sphingosylphosphoethanolamine = an N-(acyl)-sphingosyl-1,3-cyclic phosphate + ethanolamine. The enzyme catalyses a 1-acyl-sn-glycero-3-phosphocholine = a 1-acyl-sn-glycero-2,3-cyclic phosphate + choline. It catalyses the reaction a 1-acyl-sn-glycero-3-phosphoethanolamine = a 1-acyl-sn-glycero-2,3-cyclic phosphate + ethanolamine. Functionally, dermonecrotic toxins cleave the phosphodiester linkage between the phosphate and headgroup of certain phospholipids (sphingolipid and lysolipid substrates), forming an alcohol (often choline) and a cyclic phosphate. This toxin acts on sphingomyelin (SM). It may also act on ceramide phosphoethanolamine (CPE), lysophosphatidylcholine (LPC) and lysophosphatidylethanolamine (LPE), but not on lysophosphatidylserine (LPS), and lysophosphatidylglycerol (LPG). It acts by transphosphatidylation, releasing exclusively cyclic phosphate products as second products. Induces dermonecrosis, hemolysis, increased vascular permeability, edema, inflammatory response, and platelet aggregation. The polypeptide is Dermonecrotic toxin LarSicTox-alphaIB1aiv (Loxosceles arizonica (Arizona brown spider)).